The chain runs to 395 residues: NAC domain-containing protein 7 (395 aa).

The region spanning 7–156 (VPPGFRFHPT…GWVVCRVFKK (150 aa)) is the NAC domain. A DNA-binding region spans residues 107–162 (IGMRKTLVFYKGRAPNGQKSDWIMHEYRLETDENGTPQEEGWVVCRVFKKRLAAVR). Composition is skewed to polar residues over residues 344-362 (AATA…SNAE) and 382-395 (TAST…DLWK). Positions 344 to 395 (AATASASIQNNAKDTSNAEYQVDEEKDPKRASDMGEEYTASTSSSCQIDLWK) are disordered.

This sequence belongs to the plant vascular related NAC-domain protein family. In terms of assembly, interacts with NAC083/VNI2. In terms of tissue distribution, expressed in root, shoot and hypocotyl vascular elements, columella root caps, epidermal and cortex root cells and root-hypocotyl junctions. Observed predominantly in root imature xylem vessels. Present in root developing xylems. Specifically expressed in vessels in the secondary xylem of the root-hypocotyl region, and in vessels but not in interfascicular fibers in stems.

Its subcellular location is the nucleus. In terms of biological role, transcription activator that binds to the secondary wall NAC binding element (SNBE), 5'-(T/A)NN(C/T)(T/C/G)TNNNNNNNA(A/C)GN(A/C/T)(A/T)-3', in the promoter of target genes. Involved in xylem formation by promoting the expression of secondary wall-associated transcription factors and of genes involved in secondary wall biosynthesis and programmed cell death, genes driven by the secondary wall NAC binding element (SNBE). Triggers thickening of secondary walls. The polypeptide is NAC domain-containing protein 7 (Arabidopsis thaliana (Mouse-ear cress)).